Here is a 278-residue protein sequence, read N- to C-terminus: Probable endonuclease 4 (278 aa).

Zn(2+)-binding residues include His-70, His-108, Glu-143, Asp-176, His-179, His-210, Asp-223, His-225, and Glu-255.

It belongs to the AP endonuclease 2 family. Requires Zn(2+) as cofactor.

It carries out the reaction Endonucleolytic cleavage to 5'-phosphooligonucleotide end-products.. Functionally, endonuclease IV plays a role in DNA repair. It cleaves phosphodiester bonds at apurinic or apyrimidinic (AP) sites, generating a 3'-hydroxyl group and a 5'-terminal sugar phosphate. The polypeptide is Probable endonuclease 4 (Mycoplasmopsis agalactiae (strain NCTC 10123 / CIP 59.7 / PG2) (Mycoplasma agalactiae)).